Here is a 177-residue protein sequence, read N- to C-terminus: Nucleoside triphosphate/diphosphate phosphatase (177 aa).

Arg-23 serves as the catalytic Proton donor. Positions 87, 103, 105, 107, 120, and 123 each coordinate Mg(2+).

The protein belongs to the Ntdp family. Mg(2+) serves as cofactor.

It catalyses the reaction a ribonucleoside 5'-triphosphate + H2O = a ribonucleoside 5'-diphosphate + phosphate + H(+). The catalysed reaction is a ribonucleoside 5'-diphosphate + H2O = a ribonucleoside 5'-phosphate + phosphate + H(+). In terms of biological role, has nucleoside phosphatase activity towards nucleoside triphosphates and nucleoside diphosphates. The protein is Nucleoside triphosphate/diphosphate phosphatase of Streptococcus pyogenes serotype M1.